A 501-amino-acid polypeptide reads, in one-letter code: Ribose import ATP-binding protein RbsA (501 aa).

ABC transporter domains are found at residues 8-245 (LKMV…VGRT) and 255-500 (VKKG…VGIN). 40–47 (GENGAGKS) contacts ATP.

It belongs to the ABC transporter superfamily. Ribose importer (TC 3.A.1.2.1) family. The complex is composed of an ATP-binding protein (RbsA), two transmembrane proteins (RbsC) and a solute-binding protein (RbsB).

The protein resides in the cell membrane. It carries out the reaction D-ribose(out) + ATP + H2O = D-ribose(in) + ADP + phosphate + H(+). In terms of biological role, part of the ABC transporter complex RbsABC involved in ribose import. Responsible for energy coupling to the transport system. The polypeptide is Ribose import ATP-binding protein RbsA (Clostridium perfringens (strain 13 / Type A)).